The sequence spans 92 residues: Small ribosomal subunit protein uS19 (92 aa).

The protein belongs to the universal ribosomal protein uS19 family.

Protein S19 forms a complex with S13 that binds strongly to the 16S ribosomal RNA. The polypeptide is Small ribosomal subunit protein uS19 (Vibrio parahaemolyticus serotype O3:K6 (strain RIMD 2210633)).